We begin with the raw amino-acid sequence, 621 residues long: 1-deoxy-D-xylulose-5-phosphate synthase (621 aa).

Residues histidine 80 and 121–123 (GHS) each bind thiamine diphosphate. Residue aspartate 152 coordinates Mg(2+). Residues 153 to 154 (GA), asparagine 181, tyrosine 288, and glutamate 370 each bind thiamine diphosphate. Asparagine 181 serves as a coordination point for Mg(2+).

The protein belongs to the transketolase family. DXPS subfamily. As to quaternary structure, homodimer. Requires Mg(2+) as cofactor. The cofactor is thiamine diphosphate.

It catalyses the reaction D-glyceraldehyde 3-phosphate + pyruvate + H(+) = 1-deoxy-D-xylulose 5-phosphate + CO2. It participates in metabolic intermediate biosynthesis; 1-deoxy-D-xylulose 5-phosphate biosynthesis; 1-deoxy-D-xylulose 5-phosphate from D-glyceraldehyde 3-phosphate and pyruvate: step 1/1. Functionally, catalyzes the acyloin condensation reaction between C atoms 2 and 3 of pyruvate and glyceraldehyde 3-phosphate to yield 1-deoxy-D-xylulose-5-phosphate (DXP). This is 1-deoxy-D-xylulose-5-phosphate synthase from Shewanella woodyi (strain ATCC 51908 / MS32).